A 156-amino-acid chain; its full sequence is Translation initiation factor IF-1, chloroplastic (156 aa).

Residues 1-35 form a disordered region; that stretch reads MAASLTLMTSPPCSRSSKSPSPSPSPSLSCNQQQQ. The transit peptide at 1-49 directs the protein to the chloroplast; sequence MAASLTLMTSPPCSRSSKSPSPSPSPSLSCNQQQQYKPLLHHQWPPQIS. Low complexity predominate over residues 10–20; that stretch reads SPPCSRSSKSP. Positions 72–148 constitute an S1-like domain; it reads GGSPSVQEQK…TRGRITYRLR (77 aa).

The protein belongs to the IF-1 family. Component of the 30S ribosomal translation pre-initiation complex which assembles on the 30S ribosome in the order IF-2 and IF-3, IF-1 and N-formylmethionyl-tRNA(fMet); mRNA recruitment can occur at any time during PIC assembly.

The protein localises to the plastid. It is found in the chloroplast. Its function is as follows. One of the essential components for the initiation of protein synthesis. Stabilizes the binding of IF-2 and IF-3 on the 30S subunit to which N-formylmethionyl-tRNA(fMet) subsequently binds. Helps modulate mRNA selection, yielding the 30S pre-initiation complex (PIC). Upon addition of the 50S ribosomal subunit IF-1, IF-2 and IF-3 are released leaving the mature 70S translation initiation complex. This Mesembryanthemum crystallinum (Common ice plant) protein is Translation initiation factor IF-1, chloroplastic (infA).